The chain runs to 214 residues: MWLIVGLGNPGETYARTRHNIGFRVVTELAQRHHLRFTHKRAKAEIAEGEIAGQRVALALPQTYMNLSGQAVVGLRQWYKIDPATELLVVYDDVDLPFGVLRLRERGSAGTHNGMRSIVALLGSQVFPRLRIGIDRPPVAWNLADYVLARFTPEQEAQLPEVTRRAADALELVLREGIVVAMNRINAPPPKPEKKRGSETSDPSAESADHAGGG.

Tyr-14 lines the tRNA pocket. His-19 acts as the Proton acceptor in catalysis. 3 residues coordinate tRNA: Tyr-64, Asn-66, and Asn-113. Positions 184–214 (RINAPPPKPEKKRGSETSDPSAESADHAGGG) are disordered.

This sequence belongs to the PTH family. Monomer.

It is found in the cytoplasm. It carries out the reaction an N-acyl-L-alpha-aminoacyl-tRNA + H2O = an N-acyl-L-amino acid + a tRNA + H(+). Functionally, hydrolyzes ribosome-free peptidyl-tRNAs (with 1 or more amino acids incorporated), which drop off the ribosome during protein synthesis, or as a result of ribosome stalling. Catalyzes the release of premature peptidyl moieties from peptidyl-tRNA molecules trapped in stalled 50S ribosomal subunits, and thus maintains levels of free tRNAs and 50S ribosomes. The chain is Peptidyl-tRNA hydrolase from Roseiflexus castenholzii (strain DSM 13941 / HLO8).